A 406-amino-acid chain; its full sequence is Sorting nexin-6 (406 aa).

At M1 the chain carries N-acetylmethionine. An N-acetylmethionine; in Sorting nexin-6, N-terminally processed modification is found at M2. The interaction with PIM1 stretch occupies residues 2–179; it reads MEGLDDGPDF…NQDLSVRGKN (178 aa). The region spanning 26–173 is the PX domain; sequence LQSDAALQVD…HVFLEYNQDL (148 aa). Residues 41-47, 100-106, and 114-117 contribute to the a 1,2-diacyl-sn-glycero-3-phospho-(1D-myo-inositol-4,5-bisphosphate) site; these read SERDKVK, FDASREK, and EGSM. A phosphoserine mark is found at S116 and S194. Positions 182-199 are membrane-binding amphipathic helix; the sequence is EKLEDFFKNMVKSADGVI. The 204-residue stretch at 203–406 folds into the BAR domain; that stretch reads VKDVDDFFEH…NCLAVLNGDT (204 aa).

Belongs to the sorting nexin family. Forms heterodimers with BAR domain-containing sorting nexins SNX1 and SNX2. The heterodimers are proposed to self-assemble into helical arrays on the membrane to stabilize and expand local membrane curvature underlying endosomal tubule formation. Thought to be a component of the originally described retromer complex (also called SNX-BAR retromer) which is a pentamer containing the heterotrimeric retromer cargo-selective complex (CSC), also described as vacuolar protein sorting subcomplex (VPS), and a heterodimeric membrane-deforming subcomplex formed between SNX1 or SNX2 and SNX5 or SNX6 (also called SNX-BAR subcomplex); the respective CSC and SNX-BAR subcomplexes associate with low affinity. Interacts with SNX1, SNX2, VPS26A, VPS29, VPS35, CDKN1B, TGFB receptors, BACE1, BRMS1, PIP5K1C isoform 3. Interacts with DCTN1; the association with DCTN1 is involved in movement of retromer-c ontaining vesicles toward the TGN. Interacts with CDKN1B and GIT1. Interacts with PIM1; translocating SNX6 to the nucleus. Post-translationally, in vitro phosphorylated by PIM1; not affecting PIM1-dependent nuclear translocation.

The protein localises to the early endosome. It localises to the early endosome membrane. The protein resides in the cytoplasmic vesicle. It is found in the cytoplasm. Its subcellular location is the nucleus. Its function is as follows. Involved in several stages of intracellular trafficking. Interacts with membranes phosphatidylinositol 3,4-bisphosphate and/or phosphatidylinositol 4,5-bisphosphate. Acts in part as component of the retromer membrane-deforming SNX-BAR subcomplex. The SNX-BAR retromer mediates retrograde transport of cargo proteins from endosomes to the trans-Golgi network (TGN) and is involved in endosome-to-plasma membrane transport for cargo protein recycling. The SNX-BAR subcomplex functions to deform the donor membrane into a tubular profile called endosome-to-TGN transport carrier (ETC). Does not have in vitro vesicle-to-membrane remodeling activity. Involved in retrograde endosome-to-TGN transport of lysosomal enzyme receptor IGF2R. May function as link between transport vesicles and dynactin. Negatively regulates retrograde transport of BACE1 from the cell surface to the trans-Golgi network. Involved in E-cadherin sorting and degradation; inhibits PIP5K1C isoform 3-mediated E-cadherin degradation. In association with GIT1 involved in EGFR degradation. Promotes lysosomal degradation of CDKN1B. May contribute to transcription regulation. This Homo sapiens (Human) protein is Sorting nexin-6 (SNX6).